A 37-amino-acid chain; its full sequence is Large ribosomal subunit protein bL36 (37 aa).

It belongs to the bacterial ribosomal protein bL36 family.

This Listeria innocua serovar 6a (strain ATCC BAA-680 / CLIP 11262) protein is Large ribosomal subunit protein bL36.